A 1324-amino-acid chain; its full sequence is Coiled-coil domain-containing protein 171 (1324 aa).

5 coiled-coil regions span residues 29-296 (KNET…RAAH), 325-393 (AEAV…RLQY), 453-521 (FSVV…KCAD), 599-712 (SELC…VREN), and 981-1145 (FTQR…KECV). Residues 1301–1312 (PHSLSSQSSPGV) are compositionally biased toward polar residues. A disordered region spans residues 1301–1324 (PHSLSSQSSPGVPTNAKRPSQIGL).

This Mus musculus (Mouse) protein is Coiled-coil domain-containing protein 171 (Ccdc171).